The following is a 255-amino-acid chain: MNRREVRCAFSASKAARAQLLLRGKVRLEPLPTRPRTVLGLDASYSAKDGVGVGAAVLISLETLEPVDCRVYISRVCIPYIPGLLAFRELAVMAPAAAALSAEADVVMVDGHGIAHPRRFGIASHVGVILERPSIGVAKKKLVGTLVEGPGGMYVVQDGERLAIVLGTRPREVYVSPGHRITLEEAASIARATIRPGGWMPEPTRLADVISKALKTIIGGQSLINSALASLCRVKLGPRLEELERPLRRAGLEVE.

The Mg(2+) site is built by Asp42 and Asp110.

Belongs to the endonuclease V family. The cofactor is Mg(2+).

It localises to the cytoplasm. It catalyses the reaction Endonucleolytic cleavage at apurinic or apyrimidinic sites to products with a 5'-phosphate.. DNA repair enzyme involved in the repair of deaminated bases. Selectively cleaves double-stranded DNA at the second phosphodiester bond 3' to a deoxyinosine leaving behind the intact lesion on the nicked DNA. This is Endonuclease V from Aeropyrum pernix (strain ATCC 700893 / DSM 11879 / JCM 9820 / NBRC 100138 / K1).